A 155-amino-acid polypeptide reads, in one-letter code: uncharacterized protein (155 aa).

Belongs to the mimivirus L6/L7/L57 family.

This is an uncharacterized protein from Acanthamoeba polyphaga (Amoeba).